We begin with the raw amino-acid sequence, 106 residues long: PYVVTENCIKCKYQDCVEVCPVDCFYEGENFLVINPDECIDCGVCNPECPAEAIAGKWLEINRKFADLWPNITRKGPALADADDWKDKPDKTGLLSENPGKGTVCH.

4Fe-4S ferredoxin-type domains follow at residues 2-29 (YVVTENCIKCKYQDCVEVCPVDCFYEGE) and 30-59 (NFLVINPDECIDCGVCNPECPAEAIAGKWL). [3Fe-4S] cluster is bound by residues C8 and C16. The [4Fe-4S] cluster site is built by C20, C39, C42, and C45. C49 serves as a coordination point for [3Fe-4S] cluster. The segment at 80 to 106 (ADADDWKDKPDKTGLLSENPGKGTVCH) is disordered.

It depends on [4Fe-4S] cluster as a cofactor. Requires [3Fe-4S] cluster as cofactor.

Ferredoxins are iron-sulfur proteins that transfer electrons in a wide variety of metabolic reactions. This Rhodospirillum rubrum protein is Ferredoxin-2.